The following is a 71-amino-acid chain: NAD(P)H-quinone oxidoreductase subunit O (71 aa).

The protein belongs to the complex I NdhO subunit family. NDH-1 can be composed of about 15 different subunits; different subcomplexes with different compositions have been identified which probably have different functions.

The protein localises to the cellular thylakoid membrane. It carries out the reaction a plastoquinone + NADH + (n+1) H(+)(in) = a plastoquinol + NAD(+) + n H(+)(out). The catalysed reaction is a plastoquinone + NADPH + (n+1) H(+)(in) = a plastoquinol + NADP(+) + n H(+)(out). In terms of biological role, NDH-1 shuttles electrons from an unknown electron donor, via FMN and iron-sulfur (Fe-S) centers, to quinones in the respiratory and/or the photosynthetic chain. The immediate electron acceptor for the enzyme in this species is believed to be plastoquinone. Couples the redox reaction to proton translocation, and thus conserves the redox energy in a proton gradient. Cyanobacterial NDH-1 also plays a role in inorganic carbon-concentration. This chain is NAD(P)H-quinone oxidoreductase subunit O, found in Picosynechococcus sp. (strain ATCC 27264 / PCC 7002 / PR-6) (Agmenellum quadruplicatum).